Consider the following 476-residue polypeptide: Protein transport protein Sec61 subunit alpha isoform 1 (476 aa).

The Cytoplasmic segment spans residues 1–33 (MGIKFLEVIKPFCVILPEIQKPERKIQFKEKVL). The chain crosses the membrane as a helical span at residues 34–53 (WTAITLFIFLVCCQIPLFGI). At 54 to 76 (MSSDSADPFYWMRVILASNRGTL) the chain is on the lumenal side. Residues 77 to 96 (MELGISPIVTSGLIMQLLAG) form a helical membrane-spanning segment. Topologically, residues 97–117 (AKIIEVGDTPKDRALFNGAQK) are cytoplasmic. A helical transmembrane segment spans residues 118–138 (LFGMTITIGQSIVYVMTGMYG). Over 139–144 (DPSEMG) the chain is Lumenal. The chain crosses the membrane as a helical span at residues 145-165 (AGVCLLITIQLFVAGLIVLLL). Over 166–172 (DELLQKG) the chain is Cytoplasmic. Residues 173 to 193 (YGLGSGISLFIATNICETIVW) traverse the membrane as a helical segment. Residues 194–240 (KAFSPTTVNTGRGMEFEGAIIALFHLLATRTDKVRALREAFYRQNLP) lie on the Lumenal side of the membrane. Residues 241 to 261 (NLMNLIATIFVFAVVIYFQGF) form a helical membrane-spanning segment. Topologically, residues 262–288 (RVDLPIKSARYRGQYNTYPIKLFYTSN) are cytoplasmic. The chain crosses the membrane as a helical span at residues 289–309 (IPIILQSALVSNLYVISQMLS). Residues 310–354 (ARFSGNLLVSLLGTWSDTSSGGPARAYPVGGLCYYLSPPESFGSV) lie on the Lumenal side of the membrane. Residues 355–375 (LEDPVHAVVYIVFMLGSCAFF) traverse the membrane as a helical segment. Over 376–420 (SKTWIEVSGSSAKDVAKQLKEQQMVMRGHRETSMVHELNRYIPTA) the chain is Cytoplasmic. The helical transmembrane segment at 421–441 (AAFGGLCIGALSVLADFLGAI) threads the bilayer. Topologically, residues 442–445 (GSGT) are lumenal. A helical membrane pass occupies residues 446 to 462 (GILLAVTIIYQYFEIFV). At 463–476 (KEQSEVGSMGALLF) the chain is on the cytoplasmic side.

This sequence belongs to the SecY/SEC61-alpha family. The SEC61 channel-forming translocon complex consists of channel-forming core components SEC61A1, SEC61B and SEC61G and different auxiliary components such as SEC62 and SEC63. The SEC61 channel associates with the multi-pass translocon (MPT) complex.

The protein localises to the endoplasmic reticulum membrane. Its function is as follows. Component of SEC61 channel-forming translocon complex that mediates transport of signal peptide-containing precursor polypeptides across the endoplasmic reticulum (ER). Forms a ribosome receptor and a gated pore in the ER membrane, both functions required for cotranslational translocation of nascent polypeptides. May cooperate with auxiliary protein SEC62, SEC63 and HSPA5/BiP to enable post-translational transport of small presecretory proteins. The SEC61 channel is also involved in ER membrane insertion of transmembrane proteins: it mediates membrane insertion of the first few transmembrane segments of proteins, while insertion of subsequent transmembrane regions of multi-pass membrane proteins is mediated by the multi-pass translocon (MPT) complex. The SEC61 channel cooperates with the translocating protein TRAM1 to import nascent proteins into the ER. Controls the passive efflux of calcium ions from the ER lumen to the cytosol through SEC61 channel, contributing to the maintenance of cellular calcium homeostasis. Plays a critical role in nephrogenesis, specifically at pronephros stage. This chain is Protein transport protein Sec61 subunit alpha isoform 1 (SEC61A1), found in Bos taurus (Bovine).